A 117-amino-acid chain; its full sequence is uncharacterized protein (117 aa).

The helical transmembrane segment at 10–32 threads the bilayer; it reads VCYLGDIAASGFLNSIATALIAV.

It localises to the membrane. This is an uncharacterized protein from Rickettsia conorii (strain ATCC VR-613 / Malish 7).